The chain runs to 550 residues: Chaperonin GroEL (550 aa).

ATP-binding positions include 30–33 (TLGP), Lys51, 87–91 (DGTTT), Gly415, and Asp496.

Belongs to the chaperonin (HSP60) family. In terms of assembly, forms a cylinder of 14 subunits composed of two heptameric rings stacked back-to-back. Interacts with the co-chaperonin GroES.

It is found in the cytoplasm. It carries out the reaction ATP + H2O + a folded polypeptide = ADP + phosphate + an unfolded polypeptide.. In terms of biological role, together with its co-chaperonin GroES, plays an essential role in assisting protein folding. The GroEL-GroES system forms a nano-cage that allows encapsulation of the non-native substrate proteins and provides a physical environment optimized to promote and accelerate protein folding. This is Chaperonin GroEL from Rickettsia bellii (strain OSU 85-389).